The chain runs to 906 residues: Catenin alpha-2 (906 aa).

Over residues lysine 866 to threonine 880 the composition is skewed to basic and acidic residues. The disordered stretch occupies residues lysine 866–serine 892. The span at arginine 881–isoleucine 891 shows a compositional bias: basic residues.

The protein belongs to the vinculin/alpha-catenin family. Interacts with CDH1 and CDH2. As to expression, mainly in the nervous system (at protein level).

It localises to the cell membrane. The protein resides in the cytoplasm. It is found in the cytoskeleton. Its subcellular location is the cell junction. The protein localises to the adherens junction. It localises to the cell projection. The protein resides in the axon. It is found in the nucleus. Its function is as follows. May function as a linker between cadherin adhesion receptors and the cytoskeleton to regulate cell-cell adhesion and differentiation in the nervous system. This Gallus gallus (Chicken) protein is Catenin alpha-2 (CTNNA2).